The chain runs to 252 residues: Maintenance of carboxysome distribution protein A (252 aa).

Residues Gly11, Gly12, Gly14, Lys15, Thr16, Thr17, Gln41, Glu147, Lys151, Phe182, Arg183, Leu216, Glu217, and Ser218 each coordinate ATP. Thr16 lines the Mg(2+) pocket.

This sequence belongs to the ParA family. McdA subfamily. As to quaternary structure, self-associates (probably a homodimer), interacts with McdB probably via the C-terminus of both proteins. Shows no signs of filament formation. Homodimerizes in the presence of ATP, making extra nucleotide contacts than with ADP or AMP-PNP. Each subunit binds 1 ATP molecule; Glu-147, Lys-151 and Arg-183 cross the dimer interface to contact ATP in the other subunit, while Phe-182, Arg-183 and Phe-221 stack with the adenine base in their own subunit.

The protein resides in the cytoplasm. It is found in the nucleoid. The catalysed reaction is ATP + H2O = ADP + phosphate + H(+). In terms of biological role, mcdA and McdB together mediate carboxysome (Cb) spacing, size, ultrastructure and probably inheritance in the cell. Together they prevent Cb aggregation. McdA is an ATPase that forms dynamic gradients on the nucleoid in response to adapter protein McdB, which associates with carboxysomes. The interplay between McdA gradients on the nucleoid and McdB-bound carboxysomes result in the equal spacing of Cbs along the cell length. Binds nucleoid DNA in an ATP-dependent manner; neither ADP nor ATP-gamma-S support DNA binding. Upon ATP-binding dimerizes and binds nucleoid DNA; the (McdA-ATP)2 dimer transiently binds McdB-bound Cbs. McdA's ATPase activity is stimulated 2-fold by DNA and McdB; ATP hydrolysis causes McdA release from DNA. Overexpression leads to loss of McdA oscillation, diffuse nucleoid staining by McdA with formation of large carboxysome aggregates that are in regions depleted of McdA; McdA remains nucleoid-associated. Functionally, mutagenesis studies (characterized in vivo) suggest ATP binding, protein dimerization and a conformational change are necessary for nucleoid DNA-binding and binding to McdB-bound Cbs, which tethers Cbs to the nucleoid. Eventual McdB-stimulated ATP hydrolysis causes de-dimerization of McdA which no longer binds the nucleoid and releases McdB and Cbs. McdB-bound Cbs then move to a region of higher McdA concentration, distributing Cbs across the nucleoid. Incorrect positioning (aggregation) of carboxysomes results in reduced CO(2) fixation by encapsulated ribulose-1,5-bisphosphate carboxylase (RuBisCO, cbbL/cbbS), which leads to slower growth, cell elongation, asymmetric cell division and an increase in RuBisCO levels. The polypeptide is Maintenance of carboxysome distribution protein A (Synechococcus elongatus (strain ATCC 33912 / PCC 7942 / FACHB-805) (Anacystis nidulans R2)).